Reading from the N-terminus, the 444-residue chain is Argininosuccinate synthase (444 aa).

Residues 17-25 (AFSGGLDTS) and A43 each bind ATP. An L-citrulline-binding site is contributed by Y99. Residues G129 and T131 each coordinate ATP. Residues T131, N135, and D136 each coordinate L-aspartate. N135 contacts L-citrulline. D136 serves as a coordination point for ATP. 2 residues coordinate L-citrulline: R139 and S192. Position 194 (D194) interacts with ATP. Residues T201, E203, and E280 each coordinate L-citrulline.

It belongs to the argininosuccinate synthase family. Type 2 subfamily. As to quaternary structure, homotetramer.

The protein resides in the cytoplasm. It carries out the reaction L-citrulline + L-aspartate + ATP = 2-(N(omega)-L-arginino)succinate + AMP + diphosphate + H(+). The protein operates within amino-acid biosynthesis; L-arginine biosynthesis; L-arginine from L-ornithine and carbamoyl phosphate: step 2/3. This Burkholderia lata (strain ATCC 17760 / DSM 23089 / LMG 22485 / NCIMB 9086 / R18194 / 383) protein is Argininosuccinate synthase.